A 211-amino-acid polypeptide reads, in one-letter code: MGKFEVLDHPLIQHKLTMIRDKNVGTKFFRETVKEISTLMAYEVARDMPLKDVEIETPIAKTTQKELAGKKVAIIPILRAGIGMVDGMTDLIPAAKIGFIGMYRDEETLKPHEYFVKLPNDITERQLFIVDPMLATGGSAMMAIEALKKRGCSEKNMKFACLVAAPEGVKAVRDAYPDVDIYTAGLDDHLNEDGYIVPGLGDAGDRLFGTK.

5-phospho-alpha-D-ribose 1-diphosphate-binding positions include Arg79, Arg104, and 131 to 139 (DPMLATGGS). Residues Ile196 and 201-203 (GDA) contribute to the uracil site. 5-phospho-alpha-D-ribose 1-diphosphate is bound at residue Asp202.

It belongs to the UPRTase family. The cofactor is Mg(2+).

It catalyses the reaction UMP + diphosphate = 5-phospho-alpha-D-ribose 1-diphosphate + uracil. The protein operates within pyrimidine metabolism; UMP biosynthesis via salvage pathway; UMP from uracil: step 1/1. Its activity is regulated as follows. Allosterically activated by GTP. Catalyzes the conversion of uracil and 5-phospho-alpha-D-ribose 1-diphosphate (PRPP) to UMP and diphosphate. In Limosilactobacillus reuteri (strain DSM 20016) (Lactobacillus reuteri), this protein is Uracil phosphoribosyltransferase.